A 469-amino-acid chain; its full sequence is Glutamate--tRNA ligase 1 (469 aa).

Residues 8 to 18 (PSPTGYLHIGG) carry the 'HIGH' region motif. The interval 117–137 (TPRYDGTWRPEPGKELPPVPA) is disordered. A 'KMSKS' region motif is present at residues 240–244 (KLSKR). Lys-243 lines the ATP pocket.

It belongs to the class-I aminoacyl-tRNA synthetase family. Glutamate--tRNA ligase type 1 subfamily. As to quaternary structure, monomer.

Its subcellular location is the cytoplasm. The catalysed reaction is tRNA(Glu) + L-glutamate + ATP = L-glutamyl-tRNA(Glu) + AMP + diphosphate. Catalyzes the attachment of glutamate to tRNA(Glu) in a two-step reaction: glutamate is first activated by ATP to form Glu-AMP and then transferred to the acceptor end of tRNA(Glu). The protein is Glutamate--tRNA ligase 1 of Aliarcobacter butzleri (strain RM4018) (Arcobacter butzleri).